Reading from the N-terminus, the 384-residue chain is dTDP-dihydrostreptose--streptidine-6-phosphate dihydrostreptosyltransferase (384 aa).

It catalyses the reaction dTDP-L-dihydrostreptose + streptidine 6-phosphate = O-(1-&gt;4)-alpha-L-dihydrostreptosyl-streptidine 6-phosphate + dTDP + H(+). Its pathway is antibiotic biosynthesis; streptomycin biosynthesis. In terms of biological role, is probably a dihydrostreptosyl glycosyltransferase, involved in the first glycosylation step condensing streptidine-6-phosphate and dihydrostreptose. The polypeptide is dTDP-dihydrostreptose--streptidine-6-phosphate dihydrostreptosyltransferase (strH) (Streptomyces griseus).